The primary structure comprises 258 residues: UDP-N-acetylenolpyruvoylglucosamine reductase (258 aa).

R142 is a catalytic residue. S184 acts as the Proton donor in catalysis. E254 is a catalytic residue.

This sequence belongs to the MurB family. The cofactor is FAD.

It localises to the cytoplasm. It carries out the reaction UDP-N-acetyl-alpha-D-muramate + NADP(+) = UDP-N-acetyl-3-O-(1-carboxyvinyl)-alpha-D-glucosamine + NADPH + H(+). It functions in the pathway cell wall biogenesis; peptidoglycan biosynthesis. Functionally, cell wall formation. The polypeptide is UDP-N-acetylenolpyruvoylglucosamine reductase (Campylobacter jejuni subsp. jejuni serotype O:2 (strain ATCC 700819 / NCTC 11168)).